The chain runs to 396 residues: Phosphoglycerate kinase (396 aa).

Substrate is bound by residues 21-23, R36, 59-62, R114, and R147; these read DIN and HFGR. Residues K197, E319, and 349–352 each bind ATP; that span reads GGDT.

Belongs to the phosphoglycerate kinase family. In terms of assembly, monomer.

It is found in the cytoplasm. It catalyses the reaction (2R)-3-phosphoglycerate + ATP = (2R)-3-phospho-glyceroyl phosphate + ADP. The protein operates within carbohydrate degradation; glycolysis; pyruvate from D-glyceraldehyde 3-phosphate: step 2/5. The sequence is that of Phosphoglycerate kinase from Jannaschia sp. (strain CCS1).